Reading from the N-terminus, the 1342-residue chain is DNA-directed RNA polymerase subunit beta (1342 aa).

This sequence belongs to the RNA polymerase beta chain family. In terms of assembly, the RNAP catalytic core consists of 2 alpha, 1 beta, 1 beta' and 1 omega subunit. When a sigma factor is associated with the core the holoenzyme is formed, which can initiate transcription.

It carries out the reaction RNA(n) + a ribonucleoside 5'-triphosphate = RNA(n+1) + diphosphate. Functionally, DNA-dependent RNA polymerase catalyzes the transcription of DNA into RNA using the four ribonucleoside triphosphates as substrates. This Salmonella typhi protein is DNA-directed RNA polymerase subunit beta.